Here is a 199-residue protein sequence, read N- to C-terminus: Thymidine kinase (199 aa).

Residues 15–22 and 88–91 each bind ATP; these read GSMFSGKS and DEIQ. E89 serves as the catalytic Proton acceptor. Residues C145, C148, C183, and H186 each coordinate Zn(2+).

The protein belongs to the thymidine kinase family. Homotetramer.

The protein resides in the cytoplasm. The catalysed reaction is thymidine + ATP = dTMP + ADP + H(+). This is Thymidine kinase from Staphylococcus haemolyticus (strain JCSC1435).